We begin with the raw amino-acid sequence, 169 residues long: Thaumatin-like pathogenesis-related protein 3 (169 aa).

The N-terminal stretch at 1–21 (MATSSAVLFLLLAVFAAGASA) is a signal peptide.

It belongs to the thaumatin family.

In terms of biological role, associated with resistance against stem rust fungi. In Avena sativa (Oat), this protein is Thaumatin-like pathogenesis-related protein 3 (RASTL-3).